We begin with the raw amino-acid sequence, 335 residues long: Endo-beta-N-acetylglucosaminidase F2 (335 aa).

The N-terminal stretch at 1-45 (MKTANFSFALCLSVVIMLFIKCTRSEQDLSVTKDAIAQKSGVTVS) is a signal peptide. In terms of domain architecture, GH18 spans 61-321 (QISAGYYRTW…SSNDNTLRAP (261 aa)). Residues Ser73, Ser89, and Ser143 are each glycosylated (O-linked (Man...) serine). Residue Glu171 is the Proton donor of the active site.

Belongs to the glycosyl hydrolase 18 family. As to quaternary structure, monomer. In terms of processing, carbohydrates at Ser-73, Ser-89 and Ser-143 consist of (2-OMe)Man1-4GlcNAcU1-4GlcU1-4Glc1-4(2-OMe)GlcU1-4[(2-OMe)Rham1-2]Man.

It is found in the secreted. The catalysed reaction is an N(4)-(oligosaccharide-(1-&gt;3)-[oligosaccharide-(1-&gt;6)]-beta-D-Man-(1-&gt;4)-beta-D-GlcNAc-(1-&gt;4)-alpha-D-GlcNAc)-L-asparaginyl-[protein] + H2O = an oligosaccharide-(1-&gt;3)-[oligosaccharide-(1-&gt;6)]-beta-D-Man-(1-&gt;4)-D-GlcNAc + N(4)-(N-acetyl-beta-D-glucosaminyl)-L-asparaginyl-[protein]. Its function is as follows. Endohydrolysis of the di-N-acetylchitobiosyl unit in high-mannose glycopeptides and glycoproteins. Complex biantennary glycans are the preferred substrates. Tri- and tetraantennary glycans are not hydrolyzed, and high mannose glycans are very poor substrates. The sequence is that of Endo-beta-N-acetylglucosaminidase F2 (endOF2) from Elizabethkingia meningoseptica (Chryseobacterium meningosepticum).